Here is a 185-residue protein sequence, read N- to C-terminus: UPF0200 protein TON_1344 (185 aa).

7 to 14 is an ATP binding site; that stretch reads GMPGSGKS.

The protein belongs to the UPF0200 family.

The chain is UPF0200 protein TON_1344 from Thermococcus onnurineus (strain NA1).